Here is a 412-residue protein sequence, read N- to C-terminus: L-cysteine:1D-myo-inositol 2-amino-2-deoxy-alpha-D-glucopyranoside ligase (412 aa).

The tract at residues 1 to 30 (MQTWSSPSVPKLRGAPRPLRLHDTATGEVR) is disordered. Zn(2+) is bound at residue Cys-43. Residues 43-46 (CGIT), Thr-58, and 81-83 (NVT) each bind L-cysteinyl-5'-AMP. The short motif at 45-55 (ITPYDATHLGH) is the 'HIGH' region element. The short motif at 187 to 192 (ERGGDP) is the 'ERGGDP' region element. Trp-227 is an L-cysteinyl-5'-AMP binding site. A Zn(2+)-binding site is contributed by Cys-231. 249 to 251 (GSD) serves as a coordination point for L-cysteinyl-5'-AMP. His-256 provides a ligand contact to Zn(2+). Ile-283 provides a ligand contact to L-cysteinyl-5'-AMP. Positions 289-293 (KMSKS) match the 'KMSKS' region motif.

Belongs to the class-I aminoacyl-tRNA synthetase family. MshC subfamily. In terms of assembly, monomer. The cofactor is Zn(2+).

The enzyme catalyses 1D-myo-inositol 2-amino-2-deoxy-alpha-D-glucopyranoside + L-cysteine + ATP = 1D-myo-inositol 2-(L-cysteinylamino)-2-deoxy-alpha-D-glucopyranoside + AMP + diphosphate + H(+). In terms of biological role, catalyzes the ATP-dependent condensation of GlcN-Ins and L-cysteine to form L-Cys-GlcN-Ins. In Actinosynnema mirum (strain ATCC 29888 / DSM 43827 / JCM 3225 / NBRC 14064 / NCIMB 13271 / NRRL B-12336 / IMRU 3971 / 101), this protein is L-cysteine:1D-myo-inositol 2-amino-2-deoxy-alpha-D-glucopyranoside ligase.